A 481-amino-acid chain; its full sequence is Aromatic amino acid aminotransferase C1773.13 (481 aa).

This sequence belongs to the class-I pyridoxal-phosphate-dependent aminotransferase family. Pyridoxal 5'-phosphate is required as a cofactor.

It is found in the cytoplasm. It carries out the reaction an aromatic L-alpha-amino acid + 2-oxoglutarate = an aromatic oxo-acid + L-glutamate. Its function is as follows. Has aromatic amino acid transaminase activity. In Schizosaccharomyces pombe (strain 972 / ATCC 24843) (Fission yeast), this protein is Aromatic amino acid aminotransferase C1773.13.